We begin with the raw amino-acid sequence, 250 residues long: Acetylglutamate kinase (250 aa).

Substrate contacts are provided by residues 41–42, R63, and N156; that span reads GG.

This sequence belongs to the acetylglutamate kinase family. ArgB subfamily.

It localises to the cytoplasm. It catalyses the reaction N-acetyl-L-glutamate + ATP = N-acetyl-L-glutamyl 5-phosphate + ADP. Its pathway is amino-acid biosynthesis; L-arginine biosynthesis; N(2)-acetyl-L-ornithine from L-glutamate: step 2/4. Functionally, catalyzes the ATP-dependent phosphorylation of N-acetyl-L-glutamate. This Listeria monocytogenes serotype 4a (strain HCC23) protein is Acetylglutamate kinase.